Reading from the N-terminus, the 356-residue chain is Cell division protein ZipA (356 aa).

Over Met1–Leu6 the chain is Periplasmic. A helical membrane pass occupies residues Val7–Ile27. The Cytoplasmic segment spans residues Arg28 to Ala356. The interval Pro132–Arg155 is disordered.

It belongs to the ZipA family. In terms of assembly, interacts with FtsZ via their C-terminal domains.

It is found in the cell inner membrane. Functionally, essential cell division protein that stabilizes the FtsZ protofilaments by cross-linking them and that serves as a cytoplasmic membrane anchor for the Z ring. Also required for the recruitment to the septal ring of downstream cell division proteins. This is Cell division protein ZipA from Shewanella baltica (strain OS185).